A 178-amino-acid polypeptide reads, in one-letter code: Cysteine-rich venom protein VAR3 (178 aa).

Positions 1–22 (MILLKLYLTLAAILCQSRGTTS) are cleaved as a signal peptide. In terms of domain architecture, SCP spans 41–169 (NKHNDLRRTV…PLKYFLVCQY (129 aa)). 3 cysteine pairs are disulfide-bonded: C77–C156, C95–C170, and C151–C167.

Belongs to the CRISP family. Post-translationally, contains 8 disulfide bonds. In terms of tissue distribution, expressed by the venom gland.

Its subcellular location is the secreted. In terms of biological role, blocks ryanodine receptors, and potassium channels. The protein is Cysteine-rich venom protein VAR3 of Varanus acanthurus (Ridge-tailed monitor).